A 340-amino-acid polypeptide reads, in one-letter code: DNA-directed RNA polymerase subunit alpha (340 aa).

Residues 1-233 are alpha N-terminal domain (alpha-NTD); that stretch reads MIQDEIPIPV…DLFIIFLNME (233 aa). An alpha C-terminal domain (alpha-CTD) region spans residues 264–340; that stretch reads AKEVAFKQIF…QLPKDQFNIS (77 aa).

This sequence belongs to the RNA polymerase alpha chain family. In plastids the minimal PEP RNA polymerase catalytic core is composed of four subunits: alpha, beta, beta', and beta''. When a (nuclear-encoded) sigma factor is associated with the core the holoenzyme is formed, which can initiate transcription.

It localises to the plastid. Its subcellular location is the chloroplast. The catalysed reaction is RNA(n) + a ribonucleoside 5'-triphosphate = RNA(n+1) + diphosphate. In terms of biological role, DNA-dependent RNA polymerase catalyzes the transcription of DNA into RNA using the four ribonucleoside triphosphates as substrates. In Psilotum nudum (Whisk fern), this protein is DNA-directed RNA polymerase subunit alpha.